The primary structure comprises 92 residues: DNA-directed RNA polymerase subunit Rpo5 (92 aa).

This sequence belongs to the archaeal Rpo5/eukaryotic RPB5 RNA polymerase subunit family. In terms of assembly, part of the RNA polymerase complex.

It is found in the cytoplasm. It carries out the reaction RNA(n) + a ribonucleoside 5'-triphosphate = RNA(n+1) + diphosphate. DNA-dependent RNA polymerase (RNAP) catalyzes the transcription of DNA into RNA using the four ribonucleoside triphosphates as substrates. This Methanopyrus kandleri (strain AV19 / DSM 6324 / JCM 9639 / NBRC 100938) protein is DNA-directed RNA polymerase subunit Rpo5.